A 114-amino-acid polypeptide reads, in one-letter code: Cytochrome c oxidase subunit 7A2-like, mitochondrial (114 aa).

The N-terminal 55 residues, 1–55, are a transit peptide targeting the mitochondrion; it reads MYYKFSGFTQKLAGAWASEAYSPQGLKPVVSTEAPPIIFATPTKLTSDSTVYDYA. N6-acetyllysine is present on Lys-69. Residues 82 to 107 form a helical membrane-spanning segment; that stretch reads PDQMLYRTTMALTVGGTIYCLIALYM.

It belongs to the cytochrome c oxidase VIIa family. Interacts with the mitochondrial respiratory complexes III (CIII) and IV (CIV), promoting their association.

Its subcellular location is the mitochondrion inner membrane. Its function is as follows. Assembly factor that mediates the formation of some mitochondrial respiratory supercomplexes (respirasomes), thereby promoting oxidative phosphorylation and energy metabolism. Acts as a molecular adapter that associates with both mitochondrial respiratory complexes III (CIII) and IV (CIV), promoting their association. Mediates the formation of various mitochondrial respiratory supercomplexes, such as MCIII(2)IV(2), composed of two CIII and two CIV, and the CS-respirasome (MCI(1)III(2)IV(2)), composed of one CI, two CIII and two CIV. Not involved in the formation of the canonical respirasome (MCI(1)III(2)IV(1)), composed of one CI, two CIII and one CIV. The formation of different respirasomes is important for cell adaptation to oxygen conditions and prevent metabolic exhaustion: supercomplexes mediated by COX7A2L/SCAF1 are required to maintain oxidative phosphorylation upon low oxygen conditions and promote metabolic rewiring toward glycolysis. The polypeptide is Cytochrome c oxidase subunit 7A2-like, mitochondrial (Homo sapiens (Human)).